The sequence spans 2245 residues: Myosin-J heavy chain (2245 aa).

The Myosin N-terminal SH3-like domain maps to 25 to 77 (QEGAGVWIPDQELGWIGADVIEHSETSADQVLVRTEDDREVKIPLSKVFQKNP). A Myosin motor domain is found at 81 to 821 (EGVDDLSFLS…QLASLEDMRL (741 aa)). 174 to 181 (GESGAGKT) provides a ligand contact to ATP. The interval 646–672 (FTQSPGGHPQGNGGPTSSNTKGTSGSS) is disordered. Residues 660 to 672 (PTSSNTKGTSGSS) are compositionally biased toward low complexity. The interval 669 to 749 (SGSSSMKFLS…GFPTRRLLSE (81 aa)) is actin-binding. 3 IQ domains span residues 824–851 (LDRS…RDAS), 872–901 (RTHS…ASLQ), and 943–972 (KLRG…EARS). The stretch at 973 to 1812 (LRTVQEQKNK…NYHMLEDRME (840 aa)) forms a coiled coil. The segment at 1504–1524 (KKQLTQLQQQHEQSSTQLLLA) is disordered. The span at 1506-1523 (QLTQLQQQHEQSSTQLLL) shows a compositional bias: low complexity. Positions 1969 to 2188 (IDFIDQLQQS…IASICPPNKS (220 aa)) constitute a Dilute domain.

The protein belongs to the TRAFAC class myosin-kinesin ATPase superfamily. Myosin family. Homodimer that associates with six light chains.

The protein resides in the contractile vacuole. In terms of biological role, processive motor protein that can move over long distances along F-actin without disassociating; processiveness depends on high physiological Mg(2+) concentrations. Presents a high actin affinity in the presence of ADP, fast ATP hydrolysis, and a high steady-state ATPase activity in the presence of actin that is rate limited by ADP release. Physiological decrease of free Mg(2+) ions leads to an increased rate of ADP release and shortening of the fraction of time it spends in the strong acting binding states. This Dictyostelium discoideum (Social amoeba) protein is Myosin-J heavy chain (myoJ).